The following is a 605-amino-acid chain: Elongation factor 4 (605 aa).

The tr-type G domain occupies 9-192 (HHIRNFCIIA…AIVKRVPAPS (184 aa)). Residues 21–26 (DHGKST) and 139–142 (NKID) each bind GTP.

This sequence belongs to the TRAFAC class translation factor GTPase superfamily. Classic translation factor GTPase family. LepA subfamily.

The protein resides in the cell inner membrane. It catalyses the reaction GTP + H2O = GDP + phosphate + H(+). In terms of biological role, required for accurate and efficient protein synthesis under certain stress conditions. May act as a fidelity factor of the translation reaction, by catalyzing a one-codon backward translocation of tRNAs on improperly translocated ribosomes. Back-translocation proceeds from a post-translocation (POST) complex to a pre-translocation (PRE) complex, thus giving elongation factor G a second chance to translocate the tRNAs correctly. Binds to ribosomes in a GTP-dependent manner. The protein is Elongation factor 4 of Chlorobium phaeobacteroides (strain DSM 266 / SMG 266 / 2430).